Reading from the N-terminus, the 443-residue chain is Na(+)-translocating NADH-quinone reductase subunit A (443 aa).

It belongs to the NqrA family. As to quaternary structure, composed of six subunits; NqrA, NqrB, NqrC, NqrD, NqrE and NqrF.

It carries out the reaction a ubiquinone + n Na(+)(in) + NADH + H(+) = a ubiquinol + n Na(+)(out) + NAD(+). Functionally, NQR complex catalyzes the reduction of ubiquinone-1 to ubiquinol by two successive reactions, coupled with the transport of Na(+) ions from the cytoplasm to the periplasm. NqrA to NqrE are probably involved in the second step, the conversion of ubisemiquinone to ubiquinol. This is Na(+)-translocating NADH-quinone reductase subunit A from Actinobacillus succinogenes (strain ATCC 55618 / DSM 22257 / CCUG 43843 / 130Z).